A 270-amino-acid polypeptide reads, in one-letter code: Protein FAM110D (270 aa).

Over residues 1 to 16 (MLLASPSTPSRGRTPS) the composition is skewed to low complexity. Disordered stretches follow at residues 1 to 83 (MLLA…RPDS), 117 to 142 (RDVA…PQDA), and 186 to 244 (PQSW…QVSV). Positions 68–78 (RPARRGSGRRL) are enriched in basic residues.

The protein belongs to the FAM110 family.

The protein is Protein FAM110D (FAM110D) of Bos taurus (Bovine).